Reading from the N-terminus, the 252-residue chain is NAC domain-containing protein 23 (252 aa).

Residues Met-12–Lys-177 enclose the NAC domain. The DNA-binding element occupies Thr-110–Pro-183. Residues Val-225–Gly-252 are disordered. A compositionally biased stretch (acidic residues) spans Asp-234–Asp-244.

In terms of assembly, forms heterodimers with NAC26. As to expression, expressed in stems and panicles. Expressed in developing endosperm.

Its subcellular location is the nucleus. The protein localises to the cytoplasm. Transcription factor involved in the regulation of seed size. Binds to DNA-specific sequences of CLPD1 and OAT promoters in vitro. The sequence is that of NAC domain-containing protein 23 from Oryza sativa subsp. japonica (Rice).